The chain runs to 586 residues: Exocyst complex component EXO70A3 (586 aa).

Residues Asn65 and Asn106 are each glycosylated (N-linked (GlcNAc...) asparagine). The interval 119–149 is disordered; that stretch reads CLPSNLRPPSDDEGSDGKSHDPQSNGLGKTD. The chain crosses the membrane as a helical span at residues 258 to 278; it reads FAEITTISFGMLLSFGYAIAI. Residues Asn321 and Asn487 are each glycosylated (N-linked (GlcNAc...) asparagine).

This sequence belongs to the EXO70 family. As to quaternary structure, subunit of the exocyst complex. In terms of tissue distribution, confined to the outer layer of the columella cells in the root tips of young seedlings.

The protein resides in the membrane. In terms of biological role, component of the exocyst complex involved in the docking of exocytic vesicles with fusion sites on the plasma membrane during regulated or polarized secretion. Involved in PIN4 exocytosis and gravitropic responses in columella cells. By monitoring PIN4 distribution in columella cells, modulates auxin repartition and subsequently regulates the root system architecture (RSA), thus being a component of the auxin-dependent root directional growth (ARD). The polypeptide is Exocyst complex component EXO70A3 (Arabidopsis thaliana (Mouse-ear cress)).